Here is a 42-residue protein sequence, read N- to C-terminus: Crotamine-IV-3 (42 aa).

3 cysteine pairs are disulfide-bonded: Cys4/Cys37, Cys11/Cys31, and Cys19/Cys38.

The protein belongs to the crotamine-myotoxin family. As to quaternary structure, monomer. In terms of tissue distribution, expressed by the venom gland.

Its subcellular location is the secreted. Cationic peptide that possesses multiple functions. It acts as a cell-penetrating peptide (CPP), and as a potent voltage-gated potassium channel (Kv) inhibitor. It exhibits antimicrobial activities, and hind limb paralysis. It also induces potent blockade of neuromuscular transmission in young chicken biventer cervicis preparation and potent myotoxic effect. In mice, it induces myonecrosis, upon intramuscular or subcutaneous injections. The sequence is that of Crotamine-IV-3 from Crotalus durissus cumanensis (South American rattlesnake).